A 72-amino-acid polypeptide reads, in one-letter code: Variant surface glycoprotein MITAT 1.1000BC (72 aa).

The GPI-anchor amidated aspartate moiety is linked to residue Asp-50. Positions 51–72 (GSFLVNKKFALMVYDFVSLLAF) are cleaved as a propeptide — removed in mature form.

Its subcellular location is the cell membrane. In terms of biological role, VSG forms a coat on the surface of the parasite. The trypanosome evades the immune response of the host by expressing a series of antigenically distinct VSGs from an estimated 1000 VSG genes. This chain is Variant surface glycoprotein MITAT 1.1000BC, found in Trypanosoma brucei brucei.